A 586-amino-acid polypeptide reads, in one-letter code: Potassium-transporting ATPase potassium-binding subunit (586 aa).

A run of 12 helical transmembrane segments spans residues 11–31 (LFLV…AKVF), 67–87 (AVAV…ILML), 136–156 (GLAV…IAVI), 179–199 (LYVL…QGVI), 279–299 (VEIF…GVMV), 306–326 (WAIL…LQGV), 351–371 (FGLA…CGAV), 381–401 (LGGM…GGVG), 403–423 (GLYT…LMIG), 442–462 (IITV…AMIT), 507–527 (ILGS…VLAM), and 551–571 (FALW…FPAL).

Belongs to the KdpA family. In terms of assembly, the system is composed of three essential subunits: KdpA, KdpB and KdpC.

The protein resides in the cell inner membrane. Functionally, part of the high-affinity ATP-driven potassium transport (or Kdp) system, which catalyzes the hydrolysis of ATP coupled with the electrogenic transport of potassium into the cytoplasm. This subunit binds the periplasmic potassium ions and delivers the ions to the membrane domain of KdpB through an intramembrane tunnel. The sequence is that of Potassium-transporting ATPase potassium-binding subunit from Geobacter metallireducens (strain ATCC 53774 / DSM 7210 / GS-15).